Consider the following 454-residue polypeptide: Bifunctional protein GlmU (454 aa).

Residues 1 to 226 (MALNVVILAA…AVEVEGANNR (226 aa)) form a pyrophosphorylase region. UDP-N-acetyl-alpha-D-glucosamine is bound by residues 8–11 (LAAG), K22, Q73, 78–79 (GT), 100–102 (YGD), G137, E151, N166, and N224. Residue D102 coordinates Mg(2+). N224 contacts Mg(2+). Residues 227–247 (VQLAQLERAYQARAAEKLMLE) form a linker region. An N-acetyltransferase region spans residues 248–454 (GANLRDPARI…GWPRPVKLKK (207 aa)). Residues R330 and K348 each contribute to the UDP-N-acetyl-alpha-D-glucosamine site. H360 functions as the Proton acceptor in the catalytic mechanism. UDP-N-acetyl-alpha-D-glucosamine is bound by residues Y363 and N374. Acetyl-CoA is bound by residues A377, 383–384 (NY), S402, A420, and R437.

It in the N-terminal section; belongs to the N-acetylglucosamine-1-phosphate uridyltransferase family. This sequence in the C-terminal section; belongs to the transferase hexapeptide repeat family. In terms of assembly, homotrimer. Requires Mg(2+) as cofactor.

It localises to the cytoplasm. It catalyses the reaction alpha-D-glucosamine 1-phosphate + acetyl-CoA = N-acetyl-alpha-D-glucosamine 1-phosphate + CoA + H(+). The enzyme catalyses N-acetyl-alpha-D-glucosamine 1-phosphate + UTP + H(+) = UDP-N-acetyl-alpha-D-glucosamine + diphosphate. The protein operates within nucleotide-sugar biosynthesis; UDP-N-acetyl-alpha-D-glucosamine biosynthesis; N-acetyl-alpha-D-glucosamine 1-phosphate from alpha-D-glucosamine 6-phosphate (route II): step 2/2. It functions in the pathway nucleotide-sugar biosynthesis; UDP-N-acetyl-alpha-D-glucosamine biosynthesis; UDP-N-acetyl-alpha-D-glucosamine from N-acetyl-alpha-D-glucosamine 1-phosphate: step 1/1. It participates in bacterial outer membrane biogenesis; LPS lipid A biosynthesis. In terms of biological role, catalyzes the last two sequential reactions in the de novo biosynthetic pathway for UDP-N-acetylglucosamine (UDP-GlcNAc). The C-terminal domain catalyzes the transfer of acetyl group from acetyl coenzyme A to glucosamine-1-phosphate (GlcN-1-P) to produce N-acetylglucosamine-1-phosphate (GlcNAc-1-P), which is converted into UDP-GlcNAc by the transfer of uridine 5-monophosphate (from uridine 5-triphosphate), a reaction catalyzed by the N-terminal domain. The sequence is that of Bifunctional protein GlmU from Shewanella pealeana (strain ATCC 700345 / ANG-SQ1).